The following is a 114-amino-acid chain: Astacin-like metalloprotease toxin 4 (114 aa).

One can recognise a Peptidase M12A domain in the interval 1 to 114 (RETNENDYVD…GLLCLFKGSV (114 aa)). A disulfide bridge links C17 with C38. Residue H46 coordinates Zn(2+). E47 is a catalytic residue. H50 and H56 together coordinate Zn(2+). An N-linked (GlcNAc...) asparagine glycan is attached at N88.

As to quaternary structure, monomer. The cofactor is Zn(2+). As to expression, expressed by the venom gland.

It is found in the secreted. Inhibited by 1,10-phenanthroline. Its function is as follows. Zinc metalloprotease. Provoques deadhesion of endothelial cells from cell cultures, and also degradation of fibronectin, fibrinogen and gelatin in vitro. Its role in the venom is not fully understood but it might act as a spreading factor that facilitates diffusion of other venom toxins. Alternatively, it might be involved in the proteolytic processing of other venom toxins or it might play a role in extra-oral digestion of prey. In Loxosceles laeta (South American recluse spider), this protein is Astacin-like metalloprotease toxin 4.